The chain runs to 211 residues: ATP-dependent Clp protease proteolytic subunit (211 aa).

The Nucleophile role is filled by Ser-114. Residue His-139 is part of the active site.

Belongs to the peptidase S14 family. As to quaternary structure, fourteen ClpP subunits assemble into 2 heptameric rings which stack back to back to give a disk-like structure with a central cavity, resembling the structure of eukaryotic proteasomes.

The protein resides in the cytoplasm. The enzyme catalyses Hydrolysis of proteins to small peptides in the presence of ATP and magnesium. alpha-casein is the usual test substrate. In the absence of ATP, only oligopeptides shorter than five residues are hydrolyzed (such as succinyl-Leu-Tyr-|-NHMec, and Leu-Tyr-Leu-|-Tyr-Trp, in which cleavage of the -Tyr-|-Leu- and -Tyr-|-Trp bonds also occurs).. Cleaves peptides in various proteins in a process that requires ATP hydrolysis. Has a chymotrypsin-like activity. Plays a major role in the degradation of misfolded proteins. The sequence is that of ATP-dependent Clp protease proteolytic subunit from Pseudomonas fluorescens (strain SBW25).